The primary structure comprises 393 residues: 4-hydroxyphenylpyruvate dioxygenase (393 aa).

2 VOC domains span residues 17-148 and 179-339; these read AFDH…LLER and FLDH…IFSK. Residues H182, H267, and E350 each contribute to the Fe cation site.

The protein belongs to the 4HPPD family. Requires Fe cation as cofactor.

It catalyses the reaction 3-(4-hydroxyphenyl)pyruvate + O2 = homogentisate + CO2. It functions in the pathway amino-acid degradation; L-phenylalanine degradation; acetoacetate and fumarate from L-phenylalanine: step 3/6. In terms of biological role, key enzyme in the degradation of tyrosine. This Caenorhabditis briggsae protein is 4-hydroxyphenylpyruvate dioxygenase (hpd-1).